The chain runs to 414 residues: MMLGVIADDFTGASDIASFLVENGLSAVQMNGVPKQPLNSRVDAIVISLKSRSNPANEAVEQSLNAYNWLQENGCTQFYFKYCSTFDSTAKGNIGPVTDALLEALNEDFTVITPALPVNGRTIFNGYLFVGEQLLSESGMKNHPITPMTDANLMRLMDAQAKGKTGLVAYADVIQGAARVKERFAELKAQGYRYAVVDAADNSQLEVLAEAVAGLKLVTGGSGLGAYIAARLSGGKKGTNAFTPTKGKTVVLSGSCSVMTNKQVEKYCEKAPHFQLDAAQAINNPNYAEELYQWVTANLDAPLAPMVYATVPPEALKAIQNEFGADKASHAIENTFAQLAAKLKRYGVTNFINAGGETSSIVVQQLGFSGFHIGKQIAPGVPWLKAVEEDIYLALKSGNFGKEDFFEYAQGMFV.

Residues serine 255, 355–358 (GGET), and glycine 398 contribute to the ATP site.

Belongs to the four-carbon acid sugar kinase family.

The catalysed reaction is 3-dehydro-L-erythronate + ATP = 3-dehydro-4-O-phospho-L-erythronate + ADP + H(+). It catalyses the reaction 3-dehydro-D-erythronate + ATP = 3-dehydro-4-O-phospho-D-erythronate + ADP + H(+). In terms of biological role, catalyzes the ATP-dependent phosphorylation of 3-oxo-tetronate to 3-oxo-tetronate 4-phosphate. This is 3-oxo-tetronate kinase from Actinobacillus succinogenes (strain ATCC 55618 / DSM 22257 / CCUG 43843 / 130Z).